Here is a 145-residue protein sequence, read N- to C-terminus: Flagellar assembly factor FliW (145 aa).

The protein belongs to the FliW family. Interacts with translational regulator CsrA and flagellin(s).

It localises to the cytoplasm. Acts as an anti-CsrA protein, binds CsrA and prevents it from repressing translation of its target genes, one of which is flagellin. Binds to flagellin and participates in the assembly of the flagellum. The protein is Flagellar assembly factor FliW of Clostridium tetani (strain Massachusetts / E88).